The following is a 200-amino-acid chain: Dephospho-CoA kinase (200 aa).

The DPCK domain maps to 3 to 200 (RIGLTGGIGS…LIAEILTRIK (198 aa)). An ATP-binding site is contributed by 11–16 (GSGKST).

It belongs to the CoaE family.

It is found in the cytoplasm. The catalysed reaction is 3'-dephospho-CoA + ATP = ADP + CoA + H(+). The protein operates within cofactor biosynthesis; coenzyme A biosynthesis; CoA from (R)-pantothenate: step 5/5. In terms of biological role, catalyzes the phosphorylation of the 3'-hydroxyl group of dephosphocoenzyme A to form coenzyme A. The chain is Dephospho-CoA kinase from Corynebacterium efficiens (strain DSM 44549 / YS-314 / AJ 12310 / JCM 11189 / NBRC 100395).